Here is a 647-residue protein sequence, read N- to C-terminus: Protein arginine N-methyltransferase 7 (647 aa).

2 SAM-dependent MTase PRMT-type domains span residues 12 to 332 (EREW…FSLW) and 337 to 647 (GKDK…SEDS). Residues E140 and E149 contribute to the active site.

This sequence belongs to the class I-like SAM-binding methyltransferase superfamily. Protein arginine N-methyltransferase family. PRMT7 subfamily.

Functionally, arginine methyltransferase that can both catalyze the formation of omega-N monomethylarginine (MMA) and symmetrical dimethylarginine (sDMA). The chain is Protein arginine N-methyltransferase 7 (prmt-7) from Caenorhabditis elegans.